Reading from the N-terminus, the 164-residue chain is uncharacterized protein (164 aa).

This is an uncharacterized protein from Acanthamoeba polyphaga (Amoeba).